We begin with the raw amino-acid sequence, 178 residues long: Killin (178 aa).

The DNA-binding element occupies 8 to 50; that stretch reads SARPGRTVHVWGYRVEWKVRNGRKLQPSEWAGRGDLGGFKRRW.

The protein localises to the nucleus. Its function is as follows. DNA-binding protein involved in S phase checkpoint control-coupled apoptosis by mediating p53/TP53-induced apoptosis. Has the ability to inhibit DNA synthesis and S phase arrest coupled to apoptosis. Has affinity to both double- and single-stranded DNA. The sequence is that of Killin (KLLN) from Homo sapiens (Human).